A 37-amino-acid polypeptide reads, in one-letter code: MKVKPSVKQICEKCKVIRRNGRVMVICENPRHKQRQG.

Belongs to the bacterial ribosomal protein bL36 family.

This Arthrobacter sp. (strain FB24) protein is Large ribosomal subunit protein bL36A.